The primary structure comprises 335 residues: UPF0353 protein MMAR_2288 (335 aa).

2 consecutive transmembrane segments (helical) span residues 18–38 (WFFL…VLQL) and 67–87 (IPAM…AGPT). The 197-residue stretch at 98–294 (VVMLVIDVSQ…AELNSVYASL (197 aa)) folds into the VWFA domain. The helical transmembrane segment at 309–329 (MGWLRLGALVLVAAALAALLI) threads the bilayer.

This sequence belongs to the UPF0353 family.

The protein resides in the cell membrane. This is UPF0353 protein MMAR_2288 from Mycobacterium marinum (strain ATCC BAA-535 / M).